Consider the following 510-residue polypeptide: Probable allantoinase 2 (510 aa).

Zn(2+) contacts are provided by His-97, His-99, Lys-185, His-228, His-287, and Asp-360. The residue at position 185 (Lys-185) is an N6-carboxylysine.

The protein belongs to the metallo-dependent hydrolases superfamily. Allantoinase family. As to quaternary structure, homotetramer. The cofactor is Zn(2+). Post-translationally, carboxylation allows a single lysine to coordinate two zinc ions.

The enzyme catalyses (S)-allantoin + H2O = allantoate + H(+). It functions in the pathway nitrogen metabolism; (S)-allantoin degradation; allantoate from (S)-allantoin: step 1/1. This chain is Probable allantoinase 2 (allB2), found in Dictyostelium discoideum (Social amoeba).